A 478-amino-acid chain; its full sequence is uncharacterized protein (478 aa).

The 119-residue stretch at 2 to 120 folds into the RCK N-terminal domain; that stretch reads MNMITVIGFG…NIDKIINILE (119 aa).

This is an uncharacterized protein from Methanocaldococcus jannaschii (strain ATCC 43067 / DSM 2661 / JAL-1 / JCM 10045 / NBRC 100440) (Methanococcus jannaschii).